The following is a 141-amino-acid chain: MAIERTLSIIKPDAVAKNVIGQIYARFEAAGLKVVAAKMAHLSKGEAEAFYAVHKERPFFKDLVSFMISGPVMIQALEGEGAILKNRDLMGATDPKKAAAGTIRADFADSIDANAVHGSDAVETAQAEIAFFFPGMNIYSR.

Residues Lys-11, Phe-59, Arg-87, Thr-93, Arg-104, and Asn-114 each coordinate ATP. Residue His-117 is the Pros-phosphohistidine intermediate of the active site.

Belongs to the NDK family. As to quaternary structure, homotetramer. Mg(2+) serves as cofactor.

The protein resides in the cytoplasm. It carries out the reaction a 2'-deoxyribonucleoside 5'-diphosphate + ATP = a 2'-deoxyribonucleoside 5'-triphosphate + ADP. The enzyme catalyses a ribonucleoside 5'-diphosphate + ATP = a ribonucleoside 5'-triphosphate + ADP. Major role in the synthesis of nucleoside triphosphates other than ATP. The ATP gamma phosphate is transferred to the NDP beta phosphate via a ping-pong mechanism, using a phosphorylated active-site intermediate. This Polaromonas sp. (strain JS666 / ATCC BAA-500) protein is Nucleoside diphosphate kinase.